Here is an 802-residue protein sequence, read N- to C-terminus: Endoplasmin (802 aa).

A signal peptide spans 1-21 (MRALWVLGLCCVLLTFGSARA). An SRT pseudosubstrate motif motif is present at residues 42-44 (SRT). Asn62 carries N-linked (GlcNAc...) asparagine glycosylation. Ser64 is modified (phosphoserine). Asn107 is a glycosylation site (N-linked (GlcNAc...) asparagine). Residues Asn107, Asp149, and Asn162 each coordinate ATP. An N6-(2-hydroxyisobutyryl)lysine modification is found at Lys168. Ser172 bears the Phosphoserine mark. Phe199 is a binding site for ATP. Residue Asn217 is glycosylated (N-linked (GlcNAc...) asparagine). Positions 288-323 (TVEEPAEEEEAAKEEKEEADDEAAVEEEEEEKKPKT) are disordered. Residues 289 to 317 (VEEPAEEEEAAKEEKEEADDEAAVEEEEE) show a composition bias toward acidic residues. Ser403 is subject to Phosphoserine. Lys404 is subject to N6-succinyllysine. Residue Asn445 is glycosylated (N-linked (GlcNAc...) asparagine). Ser447 is subject to Phosphoserine. Lys479 carries the N6-acetyllysine modification. Asn481 and Asn502 each carry an N-linked (GlcNAc...) asparagine glycan. At Lys633 the chain carries N6-succinyllysine. The segment at 750 to 802 (DPDAKVEEEPEEEPEDTTEDTEQDEEEEMDAGTDEEEQEQEPEKKSTAEKDEL) is disordered. A compositionally biased stretch (acidic residues) spans 757–789 (EEPEEEPEDTTEDTEQDEEEEMDAGTDEEEQEQ). Thr782 carries the phosphothreonine modification. Basic and acidic residues predominate over residues 790–802 (EPEKKSTAEKDEL). The short motif at 799-802 (KDEL) is the Prevents secretion from ER element.

It belongs to the heat shock protein 90 family. As to quaternary structure, homodimer; disulfide-linked. Component of an EIF2 complex at least composed of CELF1/CUGBP1, CALR, CALR3, EIF2S1, EIF2S2, HSP90B1 and HSPA5. Part of a large chaperone multiprotein complex comprising DNAJB11, HSP90B1, HSPA5, HYOU, PDIA2, PDIA4, PDIA6, PPIB, SDF2L1, UGGT1 and very small amounts of ERP29, but not, or at very low levels, CALR nor CANX. Interacts with AIMP1; regulates its retention in the endoplasmic reticulum. Hyperglycosylated form interacts with OS9; promoting its degradation by the endoplasmic reticulum associated degradation (ERAD). Interacts with CNPY3. This interaction is disrupted in the presence of ATP. Interacts with TLR4 and TLR9, but not with TLR3. Interacts with MZB1 in a calcium-dependent manner. Interacts with METTL23. Interacts with IL1B; the interaction facilitates cargo translocation into the ERGIC. Interacts with EIF2AK3. In terms of processing, phosphorylated by CK2. Post-translationally, N-glycosylated cotranslationally at Asn-217 by STT3A-containing OST-A complex: this glycosylation is constitutive. In response to various stress, 5 additional facultative sites (Asn-62, Asn-107, Asn-445, Asn-481 and Asn-502) can be glycosylated post-translationally by STT3B-containing OST-B complex, leading to a hyperglycosylated form that is degraded by the ER-associated degradation (ERAD) pathway. In normal conditions, the OST-A complex together with CCDC134 prevent glycosylation at facultative sites during protein folding, thereby preventing hyperglycosylation. Mechanistically, nascent HSP90B1 is tethered during translation to a specialized CCDC134-containing translocon that forms a microenvironment for its folding, in which STT3A associates with the SRT pseudosubstrate motif, and prevents access to facultative glycosylation sites until folding is completed, rendering its facultative sites inaccessible to the OST-B complex.

Its subcellular location is the endoplasmic reticulum lumen. The protein localises to the sarcoplasmic reticulum lumen. It localises to the melanosome. It carries out the reaction ATP + H2O = ADP + phosphate + H(+). Functionally, ATP-dependent chaperone involved in the processing of proteins in the endoplasmic reticulum, regulating their transport. Together with MESD, acts as a modulator of the Wnt pathway by promoting the folding of LRP6, a coreceptor of the canonical Wnt pathway. When associated with CNPY3, required for proper folding of Toll-like receptors. Promotes folding and trafficking of TLR4 to the cell surface. May participate in the unfolding of cytosolic leaderless cargos (lacking the secretion signal sequence) such as the interleukin 1/IL-1 to facilitate their translocation into the ERGIC (endoplasmic reticulum-Golgi intermediate compartment) and secretion; the translocation process is mediated by the cargo receptor TMED10. In Oryctolagus cuniculus (Rabbit), this protein is Endoplasmin (HSP90B1).